Consider the following 118-residue polypeptide: Large ribosomal subunit protein uL18 (118 aa).

This sequence belongs to the universal ribosomal protein uL18 family. In terms of assembly, part of the 50S ribosomal subunit; part of the 5S rRNA/L5/L18/L25 subcomplex. Contacts the 5S and 23S rRNAs.

This is one of the proteins that bind and probably mediate the attachment of the 5S RNA into the large ribosomal subunit, where it forms part of the central protuberance. The protein is Large ribosomal subunit protein uL18 of Campylobacter lari (strain RM2100 / D67 / ATCC BAA-1060).